The sequence spans 414 residues: Serine/threonine transporter SstT (414 aa).

Residues 2-15 (TTQHSPGLFRRLAH) are Cytoplasmic-facing. The helical transmembrane segment at 16–36 (GSLVKQILAGLILGILLAWIS) threads the bilayer. Residues 37-45 (KPAAEAVGL) are Periplasmic-facing. Residues 46–66 (LGTLFVGALKAVAPILVLMLV) traverse the membrane as a helical segment. The Cytoplasmic portion of the chain corresponds to 67–83 (MASIANHQHGQKTNIRP). Residues 84–104 (ILFLYLLGTFSAALAAVIFSF) traverse the membrane as a helical segment. Residues 105 to 142 (AFPSTLHLSSSAGDISPPSGIVEVMRGLVMSMVSNPID) lie on the Periplasmic side of the membrane. The chain crosses the membrane as a helical span at residues 143-163 (ALLKGNYIGILVWAIGLGFAL). Residues 164–179 (RHGNETTKNLVNDMSN) are Cytoplasmic-facing. Residues 180–200 (AVTFMVKLVIHFAPIGIFGLV) form a helical membrane-spanning segment. The Periplasmic segment spans residues 201–217 (SSTLATTGFSTLWGYAQ). Residues 218-238 (LLVVLVGCMLLVALVVNPLLV) traverse the membrane as a helical segment. Residues 239 to 299 (WWKIRRNPFP…VSIPLGATIN (61 aa)) lie on the Cytoplasmic side of the membrane. A helical transmembrane segment spans residues 300 to 320 (MAGAAITITVLTLAAVNTLGI). The Periplasmic portion of the chain corresponds to 321 to 331 (PVDLPTALLLS). Residues 332–352 (VVASLCACGASGVAGGSLLLI) form a helical membrane-spanning segment. Over 353 to 414 (PLACNMFGIS…DRLANSALRN (62 aa)) the chain is Cytoplasmic.

The protein belongs to the dicarboxylate/amino acid:cation symporter (DAACS) (TC 2.A.23) family.

It is found in the cell inner membrane. It carries out the reaction L-serine(in) + Na(+)(in) = L-serine(out) + Na(+)(out). The enzyme catalyses L-threonine(in) + Na(+)(in) = L-threonine(out) + Na(+)(out). Its function is as follows. Involved in the import of serine and threonine into the cell, with the concomitant import of sodium (symport system). The polypeptide is Serine/threonine transporter SstT (Escherichia coli (strain UTI89 / UPEC)).